Here is a 179-residue protein sequence, read N- to C-terminus: Dual-action ribosomal maturation protein DarP (179 aa).

The protein belongs to the DarP family.

It is found in the cytoplasm. In terms of biological role, member of a network of 50S ribosomal subunit biogenesis factors which assembles along the 30S-50S interface, preventing incorrect 23S rRNA structures from forming. Promotes peptidyl transferase center (PTC) maturation. The chain is Dual-action ribosomal maturation protein DarP from Photorhabdus laumondii subsp. laumondii (strain DSM 15139 / CIP 105565 / TT01) (Photorhabdus luminescens subsp. laumondii).